Here is a 420-residue protein sequence, read N- to C-terminus: L-cysteine:1D-myo-inositol 2-amino-2-deoxy-alpha-D-glucopyranoside ligase (420 aa).

A Zn(2+)-binding site is contributed by Cys-48. L-cysteinyl-5'-AMP-binding positions include 48–51, Thr-63, and 86–88; these read CGIT and NIT. Positions 50–60 match the 'HIGH' region motif; sequence ITPYDSTHLGH. Positions 192–197 match the 'ERGGDP' region motif; that stretch reads ERGGDP. Trp-232 lines the L-cysteinyl-5'-AMP pocket. Residue Cys-236 coordinates Zn(2+). Residue 254 to 256 participates in L-cysteinyl-5'-AMP binding; sequence GSD. His-261 is a Zn(2+) binding site. Ile-288 is an L-cysteinyl-5'-AMP binding site. A 'KMSKS' region motif is present at residues 294-298; sequence KMSKS.

It belongs to the class-I aminoacyl-tRNA synthetase family. MshC subfamily. Monomer. The cofactor is Zn(2+).

The catalysed reaction is 1D-myo-inositol 2-amino-2-deoxy-alpha-D-glucopyranoside + L-cysteine + ATP = 1D-myo-inositol 2-(L-cysteinylamino)-2-deoxy-alpha-D-glucopyranoside + AMP + diphosphate + H(+). Functionally, catalyzes the ATP-dependent condensation of GlcN-Ins and L-cysteine to form L-Cys-GlcN-Ins. The polypeptide is L-cysteine:1D-myo-inositol 2-amino-2-deoxy-alpha-D-glucopyranoside ligase (Corynebacterium glutamicum (strain R)).